An 85-amino-acid polypeptide reads, in one-letter code: Antibacterial factor-related peptide 2 (85 aa).

An N-terminal signal peptide occupies residues 1–17 (MFVRSLFLALLLATIVA). Positions 82–85 (IKRG) are excised as a propeptide.

As to expression, expressed in the pharynx (at protein level). Detected in pharyngeal neurons and secretory cells.

The protein resides in the secreted. Functionally, exhibits antimicrobial activity against the Gram-positive bacteria B.subtilis IFO 3134, K.varians MAFF 118076 and S.aureus ATCC 6538P, the Gram-negative bacteria A.tumefaciens MAFF 1001, B.bacteriovorus MAFF 106101 and K.pneumoniae MAFF 519002, and the yeasts C.krusei MAFF 114085, K.thermotolerans MAFF 113848 and T.delbrueckii MAFF 113811. The sequence is that of Antibacterial factor-related peptide 2 from Caenorhabditis elegans.